Reading from the N-terminus, the 393-residue chain is Protein TsgA (393 aa).

Helical transmembrane passes span W11–M31, F51–P71, F78–L98, A101–I121, L134–F154, W162–G182, I206–I226, T245–L265, I273–P293, A297–L317, F332–V352, and L361–V381.

It belongs to the major facilitator superfamily. TsgA family.

The protein localises to the cell inner membrane. In Shigella dysenteriae serotype 1 (strain Sd197), this protein is Protein TsgA.